Here is a 153-residue protein sequence, read N- to C-terminus: 6,7-dimethyl-8-ribityllumazine synthase (153 aa).

5-amino-6-(D-ribitylamino)uracil contacts are provided by residues phenylalanine 22, 56–58 (AFE), and 80–82 (CVI). 85–86 (AT) is a binding site for (2S)-2-hydroxy-3-oxobutyl phosphate. The active-site Proton donor is the histidine 88. A 5-amino-6-(D-ribitylamino)uracil-binding site is contributed by phenylalanine 113. Arginine 127 provides a ligand contact to (2S)-2-hydroxy-3-oxobutyl phosphate.

The protein belongs to the DMRL synthase family.

The enzyme catalyses (2S)-2-hydroxy-3-oxobutyl phosphate + 5-amino-6-(D-ribitylamino)uracil = 6,7-dimethyl-8-(1-D-ribityl)lumazine + phosphate + 2 H2O + H(+). Its pathway is cofactor biosynthesis; riboflavin biosynthesis; riboflavin from 2-hydroxy-3-oxobutyl phosphate and 5-amino-6-(D-ribitylamino)uracil: step 1/2. In terms of biological role, catalyzes the formation of 6,7-dimethyl-8-ribityllumazine by condensation of 5-amino-6-(D-ribitylamino)uracil with 3,4-dihydroxy-2-butanone 4-phosphate. This is the penultimate step in the biosynthesis of riboflavin. This is 6,7-dimethyl-8-ribityllumazine synthase from Endomicrobium trichonymphae.